Here is a 464-residue protein sequence, read N- to C-terminus: Probable pectin lyase F (464 aa).

The N-terminal stretch at 1–20 is a signal peptide; the sequence is MAIIRSVIAATALLGAAVNA. The cysteines at positions 80 and 103 are disulfide-linked. N126 carries an N-linked (GlcNAc...) asparagine glycan. The active site involves R252. C319 and C327 are disulfide-bonded. The interval 424–464 is disordered; the sequence is EHEVSTPAVPTPTPVPSSVGSHGSTAGSSHPPAFSRTSFES. Positions 439 to 448 are enriched in low complexity; the sequence is PSSVGSHGST.

The protein belongs to the polysaccharide lyase 1 family.

It localises to the secreted. The catalysed reaction is Eliminative cleavage of (1-&gt;4)-alpha-D-galacturonan methyl ester to give oligosaccharides with 4-deoxy-6-O-methyl-alpha-D-galact-4-enuronosyl groups at their non-reducing ends.. Functionally, pectinolytic enzymes consist of four classes of enzymes: pectin lyase, polygalacturonase, pectin methylesterase and rhamnogalacturonase. Among pectinolytic enzymes, pectin lyase is the most important in depolymerization of pectin, since it cleaves internal glycosidic bonds of highly methylated pectins. The protein is Probable pectin lyase F (pelF) of Emericella nidulans (strain FGSC A4 / ATCC 38163 / CBS 112.46 / NRRL 194 / M139) (Aspergillus nidulans).